Consider the following 694-residue polypeptide: ATP-binding cassette sub-family G member 8 (694 aa).

Topologically, residues 1–437 (MAEKTKEETQ…ISNDFRDLPT (437 aa)) are cytoplasmic. The 245-residue stretch at 91–335 (AQFKLPWRSR…FTSIGYPCPR (245 aa)) folds into the ABC transporter domain. Residues 436–684 (PTLFIHGAEA…FLSLYYLSLK (249 aa)) form the ABC transmembrane type-2 domain. The chain crosses the membrane as a helical span at residues 438–458 (LFIHGAEACLMSLIIGFLYYG). Over 459 to 468 (HADKPLSFMD) the chain is Extracellular. Residues 469-489 (MAALLFMIGALIPFNVILDVV) form a helical membrane-spanning segment. Over 490-518 (SKCHSERSLLYYELEDGLYTAGPYFFAKV) the chain is Cytoplasmic. Residues 519–539 (LGELPEHCAYVIIYGMPIYWL) traverse the membrane as a helical segment. Residues 540–548 (TNLRPGPEL) lie on the Extracellular side of the membrane. A helical transmembrane segment spans residues 549-569 (FLLHFMLLWLVVFCCRTMALA). Topologically, residues 570-576 (ASAMLPT) are cytoplasmic. A helical transmembrane segment spans residues 577-597 (FHMSSFCCNALYNSFYLTAGF). The Extracellular segment spans residues 598–660 (MINLNNLWIV…VTAMDLNSHP (63 aa)). Residue Asn640 is glycosylated (N-linked (GlcNAc...) asparagine). A helical transmembrane segment spans residues 661–681 (LYAIYLIVIGISCGFLSLYYL). Residues 682–694 (SLKFIKQKSIQDW) lie on the Cytoplasmic side of the membrane.

This sequence belongs to the ABC transporter superfamily. ABCG family. Eye pigment precursor importer (TC 3.A.1.204) subfamily. In terms of assembly, heterodimer with ABCG8. Requires Mg(2+) as cofactor. In terms of processing, N-glycosylated. N-glycosylation is important for efficient export out of the endoplasmic reticulum. As to expression, highest expression in liver, with lower levels in small intestine and colon.

It localises to the cell membrane. The protein localises to the apical cell membrane. The catalysed reaction is cholesterol(in) + ATP + H2O = cholesterol(out) + ADP + phosphate + H(+). It catalyses the reaction sitosterol(in) + ATP + H2O = sitosterol(out) + ADP + phosphate + H(+). Its function is as follows. ABCG5 and ABCG8 form an obligate heterodimer that mediates Mg(2+)- and ATP-dependent sterol transport across the cell membrane. Plays an essential role in the selective transport of the dietary cholesterol in and out of the enterocytes and in the selective sterol excretion by the liver into bile. Required for normal sterol homeostasis. The heterodimer with ABCG5 has ATPase activity. The protein is ATP-binding cassette sub-family G member 8 of Rattus norvegicus (Rat).